The sequence spans 897 residues: Leucine--tRNA ligase (897 aa).

The short motif at 49-59 (PYPSGKLHMGH) is the 'HIGH' region element. The short motif at 654–658 (KMSKS) is the 'KMSKS' region element. K657 contributes to the ATP binding site.

The protein belongs to the class-I aminoacyl-tRNA synthetase family.

The protein localises to the cytoplasm. It carries out the reaction tRNA(Leu) + L-leucine + ATP = L-leucyl-tRNA(Leu) + AMP + diphosphate. In Methylibium petroleiphilum (strain ATCC BAA-1232 / LMG 22953 / PM1), this protein is Leucine--tRNA ligase.